Consider the following 278-residue polypeptide: uncharacterized protein (278 aa).

10 helical membrane-spanning segments follow: residues 1 to 21 (MLEILMSLTAAICWAFNGIAY), 30 to 50 (AFTANFHRTLFATVYFLPLAL), 56 to 76 (VVIDLQTALVLVISAMLSFYI), 92 to 112 (IALPASSTYPVYVVLLSTVIY), 116 to 136 (LSLNALISAILVFVAVYIIYG), 146 to 166 (LFYALLAAFSWALAILTLDFL), 170 to 190 (LPVSIVAFVRLLLCLILLSFT), 209 to 229 (GIFLLLGIMLFITAIKVSSSW), 230 to 250 (NVVQPSSTSPVFAAIFGAIFL), and 258 to 278 (LVAGIFVIILAILLLLLPPLQ). 2 consecutive EamA domains span residues 12–136 (ICWA…IIYG) and 154–274 (FSWA…LLLL).

Belongs to the EamA transporter family.

It is found in the cell membrane. This is an uncharacterized protein from Archaeoglobus fulgidus (strain ATCC 49558 / DSM 4304 / JCM 9628 / NBRC 100126 / VC-16).